The chain runs to 279 residues: Energy-coupling factor transporter ATP-binding protein EcfA1 (279 aa).

In terms of domain architecture, ABC transporter spans 6 to 240; it reads LSIEGVSFRY…GSKLERIGLD (235 aa). An ATP-binding site is contributed by 40 to 47; that stretch reads GHNGSGKS.

This sequence belongs to the ABC transporter superfamily. Energy-coupling factor EcfA family. Forms a stable energy-coupling factor (ECF) transporter complex composed of 2 membrane-embedded substrate-binding proteins (S component), 2 ATP-binding proteins (A component) and 2 transmembrane proteins (T component).

The protein resides in the cell membrane. Its function is as follows. ATP-binding (A) component of a common energy-coupling factor (ECF) ABC-transporter complex. Unlike classic ABC transporters this ECF transporter provides the energy necessary to transport a number of different substrates. The protein is Energy-coupling factor transporter ATP-binding protein EcfA1 of Geobacillus kaustophilus (strain HTA426).